A 393-amino-acid polypeptide reads, in one-letter code: ATP phosphoribosyltransferase regulatory subunit (393 aa).

This sequence belongs to the class-II aminoacyl-tRNA synthetase family. HisZ subfamily. Heteromultimer composed of HisG and HisZ subunits.

It localises to the cytoplasm. Its pathway is amino-acid biosynthesis; L-histidine biosynthesis; L-histidine from 5-phospho-alpha-D-ribose 1-diphosphate: step 1/9. Required for the first step of histidine biosynthesis. May allow the feedback regulation of ATP phosphoribosyltransferase activity by histidine. The polypeptide is ATP phosphoribosyltransferase regulatory subunit (Nitrosospira multiformis (strain ATCC 25196 / NCIMB 11849 / C 71)).